Consider the following 601-residue polypeptide: DNA ligase (601 aa).

D258 lines the ATP pocket. The active-site N6-AMP-lysine intermediate is K260. ATP contacts are provided by R265, R280, E310, F350, R427, and K433. The disordered stretch occupies residues 568–601 (DKSPEDATTTDEILEMYNKQPKKKIESPPIDESV).

This sequence belongs to the ATP-dependent DNA ligase family. Requires Mg(2+) as cofactor.

It carries out the reaction ATP + (deoxyribonucleotide)n-3'-hydroxyl + 5'-phospho-(deoxyribonucleotide)m = (deoxyribonucleotide)n+m + AMP + diphosphate.. Its function is as follows. DNA ligase that seals nicks in double-stranded DNA during DNA replication, DNA recombination and DNA repair. This is DNA ligase from Saccharolobus islandicus (strain Y.N.15.51 / Yellowstone #2) (Sulfolobus islandicus).